Here is a 510-residue protein sequence, read N- to C-terminus: Probable inorganic carbon transporter subunit DabB (510 aa).

14 helical membrane-spanning segments follow: residues 9–29 (TLLT…LLFL), 37–57 (FVHI…LALV), 68–88 (WHLD…GLII), 105–122 (YFAL…AWLS), 125–145 (LRFM…LIGL), 158–178 (ISGY…IWLF), 204–224 (TGIN…WPFQ), 226–246 (WLIE…AGLV), 266–286 (QIIL…ISLV), 303–323 (GFML…HLIL), 355–375 (LWMI…WFIT), 382–402 (LVSA…LVVF), 410–430 (IAGL…HNSL), and 446–466 (APAV…CTFV).

This sequence belongs to the inorganic carbon transporter (TC 9.A.2) DabB family. Forms a complex with DabA.

It localises to the cell membrane. Functionally, part of an energy-coupled inorganic carbon pump. Expression of both dabA and dabB (DA2) restores growth in ambient air to E.coli deleted of its carbonic anhydrase genes (called CAfree, deletion of 'can' and 'cynT'). In Bacillus anthracis, this protein is Probable inorganic carbon transporter subunit DabB.